Consider the following 224-residue polypeptide: E3 ubiquitin-protein ligase TRIM48 (224 aa).

The RING-type zinc-finger motif lies at 31–72; that stretch reads CPICMNYFIDPVTIDCGHSFCRPCFYLNWQDIPILTQCFECI. The segment at 104-145 adopts a B box-type zinc-finger fold; sequence SEEQMCGIHRETKKMFCEVDRSLLCLLCSSSQEHRYHRHCPA. Zn(2+) is bound by residues cysteine 109, histidine 112, cysteine 131, and histidine 137.

Belongs to the TRIM/RBCC family. In terms of assembly, interacts with PRMT1; the interaction leads to ubiquitination of PRMT1 by TRIM48. Interacts with MAP3K5. Interacts with STRAP.

The protein localises to the cytoplasm. The protein resides in the cytosol. The catalysed reaction is S-ubiquitinyl-[E2 ubiquitin-conjugating enzyme]-L-cysteine + [acceptor protein]-L-lysine = [E2 ubiquitin-conjugating enzyme]-L-cysteine + N(6)-ubiquitinyl-[acceptor protein]-L-lysine.. E3 ubiquitin-protein ligase which promotes K48-linked polyubiquitination of protein methyltransferase PRMT1, leading to PRMT1 degradation. This suppresses methylation of the PRMT1 substrate MAP3K5/ASK1, promoting its activation and increasing MAP3K5-dependent cell death induced by oxidative stress. TRIM48-mediated ubiquitination of PRMT1 also suppresses methylation of FOXO1 by PRMT1, leading to inhibition of FOXO1 transcriptional activity. The sequence is that of E3 ubiquitin-protein ligase TRIM48 from Homo sapiens (Human).